Consider the following 159-residue polypeptide: Phosphopantetheine adenylyltransferase (159 aa).

Residue Ser9 coordinates substrate. ATP is bound by residues 9–10 (SF) and His17. Substrate contacts are provided by Lys41, Ile73, and Lys87. ATP contacts are provided by residues 88–90 (GLR), Glu98, and 122–128 (WGYVSSS).

The protein belongs to the bacterial CoaD family. Homohexamer. Mg(2+) is required as a cofactor.

The protein localises to the cytoplasm. The catalysed reaction is (R)-4'-phosphopantetheine + ATP + H(+) = 3'-dephospho-CoA + diphosphate. It functions in the pathway cofactor biosynthesis; coenzyme A biosynthesis; CoA from (R)-pantothenate: step 4/5. Its function is as follows. Reversibly transfers an adenylyl group from ATP to 4'-phosphopantetheine, yielding dephospho-CoA (dPCoA) and pyrophosphate. In Nocardioides sp. (strain ATCC BAA-499 / JS614), this protein is Phosphopantetheine adenylyltransferase.